Here is a 302-residue protein sequence, read N- to C-terminus: Recombination-associated protein RdgC (302 aa).

Belongs to the RdgC family.

It localises to the cytoplasm. The protein resides in the nucleoid. May be involved in recombination. This chain is Recombination-associated protein RdgC, found in Psychromonas ingrahamii (strain DSM 17664 / CCUG 51855 / 37).